A 278-amino-acid chain; its full sequence is 4-deoxy-L-threo-5-hexosulose-uronate ketol-isomerase (278 aa).

The Zn(2+) site is built by histidine 196, histidine 198, glutamate 203, and histidine 245.

It belongs to the KduI family. Requires Zn(2+) as cofactor.

It catalyses the reaction 5-dehydro-4-deoxy-D-glucuronate = 3-deoxy-D-glycero-2,5-hexodiulosonate. It functions in the pathway glycan metabolism; pectin degradation; 2-dehydro-3-deoxy-D-gluconate from pectin: step 4/5. Its function is as follows. Catalyzes the isomerization of 5-dehydro-4-deoxy-D-glucuronate to 3-deoxy-D-glycero-2,5-hexodiulosonate. This is 4-deoxy-L-threo-5-hexosulose-uronate ketol-isomerase from Salmonella choleraesuis (strain SC-B67).